A 531-amino-acid chain; its full sequence is Tubulin-folding cofactor E (531 aa).

The region spanning 32–76 is the CAP-Gly domain; it reads GDVEGYSGTWIGVDWDQDGDGKHNGSVNGVFYFNGRSQSSASFVR. LRR repeat units follow at residues 84–109, 159–183, 185–213, 233–256, 260–284, 285–308, 318–342, 344–366, and 474–497; these read ITLLQALELRYRTISTKDEEDEMYVL, LPNLKLLDLTGNLISDWEEIGALCE, LPALTTLNLSCNSLSSDIKSLPQLKNIRV, LPGIEELHLMGNMISTITSTSSSD, FNSLRLLNLDDNCISDWSEVLKLSQ, LPCLEQLYLNKNKLSRIFQSVNGT, FPSLSCLLLGANNIGDLASVDALNG, PQLVDIRLSENPISDPVRGGVPR, and VGKLKILSENFFKLKSIKPRLFLQ.

It belongs to the TBCE family. Supercomplex made of cofactors A to E. Cofactors A and D function by capturing and stabilizing tubulin in a quasi-native conformation. Cofactor E binds to the cofactor D-tubulin complex; interaction with cofactor C then causes the release of tubulin polypeptides that are committed to the native state.

The protein localises to the cytoplasm. In terms of biological role, essential tubulin-folding protein involved in the tubulin folding pathway. Not essential for cell viability. Probably involved in the binding of alpha-tubulin in the multimeric supercomplex. The protein is Tubulin-folding cofactor E (TFCE) of Arabidopsis thaliana (Mouse-ear cress).